The primary structure comprises 284 residues: Diaminopimelate epimerase (284 aa).

3 residues coordinate substrate: Asn-21, Gln-54, and Asn-74. The active-site Proton donor is the Cys-83. Residues 84–85 (GN), Asn-167, Asn-200, and 218–219 (ER) contribute to the substrate site. The Proton acceptor role is filled by Cys-227. 228–229 (GS) is a substrate binding site.

Belongs to the diaminopimelate epimerase family. Homodimer.

The protein localises to the cytoplasm. The catalysed reaction is (2S,6S)-2,6-diaminopimelate = meso-2,6-diaminopimelate. It functions in the pathway amino-acid biosynthesis; L-lysine biosynthesis via DAP pathway; DL-2,6-diaminopimelate from LL-2,6-diaminopimelate: step 1/1. In terms of biological role, catalyzes the stereoinversion of LL-2,6-diaminopimelate (L,L-DAP) to meso-diaminopimelate (meso-DAP), a precursor of L-lysine and an essential component of the bacterial peptidoglycan. The chain is Diaminopimelate epimerase from Buchnera aphidicola subsp. Acyrthosiphon pisum (strain APS) (Acyrthosiphon pisum symbiotic bacterium).